The primary structure comprises 399 residues: Ubiquitin-like modifier-activating enzyme 5 (399 aa).

ATP-binding residues include G76, D97, K120, N143, and N177. Zn(2+) contacts are provided by C219 and C222. The active-site Glycyl thioester intermediate is C243. The Zn(2+) site is built by C296 and C301.

It belongs to the ubiquitin-activating E1 family. UBA5 subfamily.

Functionally, E1-like enzyme which activates UFM1. This is Ubiquitin-like modifier-activating enzyme 5 from Drosophila mojavensis (Fruit fly).